The sequence spans 155 residues: Ribonuclease H (155 aa).

The region spanning 7-150 (AQNAVDLYTD…ADKLACKGRD (144 aa)) is the RNase H type-1 domain. Mg(2+)-binding residues include D16, E54, D77, and D142.

Belongs to the RNase H family. In terms of assembly, monomer. It depends on Mg(2+) as a cofactor.

The protein resides in the cytoplasm. It carries out the reaction Endonucleolytic cleavage to 5'-phosphomonoester.. Functionally, endonuclease that specifically degrades the RNA of RNA-DNA hybrids. The chain is Ribonuclease H from Saccharopolyspora erythraea (strain ATCC 11635 / DSM 40517 / JCM 4748 / NBRC 13426 / NCIMB 8594 / NRRL 2338).